We begin with the raw amino-acid sequence, 123 residues long: Ribulose bisphosphate carboxylase small subunit, chloroplastic 1 (123 aa).

Residue M1 is modified to Methionine derivative.

It belongs to the RuBisCO small chain family. Heterohexadecamer of 8 large and 8 small subunits.

It localises to the plastid. The protein localises to the chloroplast. In terms of biological role, ruBisCO catalyzes two reactions: the carboxylation of D-ribulose 1,5-bisphosphate, the primary event in carbon dioxide fixation, as well as the oxidative fragmentation of the pentose substrate. Both reactions occur simultaneously and in competition at the same active site. Although the small subunit is not catalytic it is essential for maximal activity. The sequence is that of Ribulose bisphosphate carboxylase small subunit, chloroplastic 1 from Spinacia oleracea (Spinach).